The chain runs to 333 residues: Leucine carboxyl methyltransferase 1 (333 aa).

Residues Lys42, Arg82, Gly107, Asp131, 181-182 (DL), and Glu208 each bind S-adenosyl-L-methionine.

The protein belongs to the methyltransferase superfamily. LCMT family.

The enzyme catalyses [phosphatase 2A protein]-C-terminal L-leucine + S-adenosyl-L-methionine = [phosphatase 2A protein]-C-terminal L-leucine methyl ester + S-adenosyl-L-homocysteine. Methylates the carboxyl group of the C-terminal leucine residue of protein phosphatase 2A catalytic subunits to form alpha-leucine ester residues. This chain is Leucine carboxyl methyltransferase 1, found in Caenorhabditis elegans.